We begin with the raw amino-acid sequence, 910 residues long: Protein translocase subunit SecA (910 aa).

ATP is bound by residues glutamine 89, 107–111 (GEGKT), and aspartate 502. Cysteine 889, cysteine 891, cysteine 900, and histidine 901 together coordinate Zn(2+).

The protein belongs to the SecA family. Monomer and homodimer. Part of the essential Sec protein translocation apparatus which comprises SecA, SecYEG and auxiliary proteins SecDF-YajC and YidC. Requires Zn(2+) as cofactor.

Its subcellular location is the cell inner membrane. The protein localises to the cytoplasm. It catalyses the reaction ATP + H2O + cellular proteinSide 1 = ADP + phosphate + cellular proteinSide 2.. Its function is as follows. Part of the Sec protein translocase complex. Interacts with the SecYEG preprotein conducting channel. Has a central role in coupling the hydrolysis of ATP to the transfer of proteins into and across the cell membrane, serving both as a receptor for the preprotein-SecB complex and as an ATP-driven molecular motor driving the stepwise translocation of polypeptide chains across the membrane. The polypeptide is Protein translocase subunit SecA (Bartonella bacilliformis (strain ATCC 35685 / KC583 / Herrer 020/F12,63)).